The primary structure comprises 506 residues: Maturase K (506 aa).

Belongs to the intron maturase 2 family. MatK subfamily.

The protein resides in the plastid. Its subcellular location is the chloroplast. Its function is as follows. Usually encoded in the trnK tRNA gene intron. Probably assists in splicing its own and other chloroplast group II introns. This chain is Maturase K, found in Manihot esculenta (Cassava).